The chain runs to 170 residues: Peptide deformylase (170 aa).

Residues Cys92 and His134 each contribute to the Fe cation site. The active site involves Glu135. His138 is a binding site for Fe cation.

Belongs to the polypeptide deformylase family. Fe(2+) serves as cofactor.

It catalyses the reaction N-terminal N-formyl-L-methionyl-[peptide] + H2O = N-terminal L-methionyl-[peptide] + formate. Its function is as follows. Removes the formyl group from the N-terminal Met of newly synthesized proteins. Requires at least a dipeptide for an efficient rate of reaction. N-terminal L-methionine is a prerequisite for activity but the enzyme has broad specificity at other positions. The sequence is that of Peptide deformylase from Chromohalobacter salexigens (strain ATCC BAA-138 / DSM 3043 / CIP 106854 / NCIMB 13768 / 1H11).